A 203-amino-acid chain; its full sequence is Urease accessory protein UreG (203 aa).

A GTP-binding site is contributed by Gly14–Thr21.

The protein belongs to the SIMIBI class G3E GTPase family. UreG subfamily. In terms of assembly, homodimer. UreD, UreF and UreG form a complex that acts as a GTP-hydrolysis-dependent molecular chaperone, activating the urease apoprotein by helping to assemble the nickel containing metallocenter of UreC. The UreE protein probably delivers the nickel.

It is found in the cytoplasm. Functionally, facilitates the functional incorporation of the urease nickel metallocenter. This process requires GTP hydrolysis, probably effectuated by UreG. This is Urease accessory protein UreG from Sinorhizobium fredii (strain NBRC 101917 / NGR234).